The chain runs to 786 residues: UPF0313 protein SO_0311 (786 aa).

In terms of domain architecture, Radical SAM core spans 371-649 (AYDMIKTSIN…KALLRYHDPA (279 aa)). [4Fe-4S] cluster contacts are provided by C385, C389, and C392. Disordered stretches follow at residues 669 to 688 (NSPNHLVPPEGRNERGPKWM) and 698 to 786 (LTRF…QQAK). Basic and acidic residues-rich tracts occupy residues 679–688 (GRNERGPKWM) and 706–717 (FDERKGKGDAKG). The span at 718-731 (KPSASKPKGPKSGA) shows a compositional bias: low complexity. Over residues 732–741 (NAPQSQQPKT) the composition is skewed to polar residues.

The protein belongs to the UPF0313 family. It depends on [4Fe-4S] cluster as a cofactor.

This is UPF0313 protein SO_0311 from Shewanella oneidensis (strain ATCC 700550 / JCM 31522 / CIP 106686 / LMG 19005 / NCIMB 14063 / MR-1).